The primary structure comprises 260 residues: Putative protein phosphatase 2C-like protein 44 (260 aa).

The 219-residue stretch at 41–259 (YYTVDRLSYA…SSISCVVIRF (219 aa)) folds into the PPM-type phosphatase domain.

This sequence belongs to the PP2C family.

The sequence is that of Putative protein phosphatase 2C-like protein 44 from Arabidopsis thaliana (Mouse-ear cress).